Consider the following 385-residue polypeptide: MSWQQRVDDALTARRATDTLRRRYVVSQGAGRWLVANGRQYLNFSSNDYLGLSQHPQIIRAWQQAATRFGVGSGGSGHISGYSVAHRALEEELAQWLGYPRALLFISGFAANQAVITALMKKNDRIVADRLSHASLLEAANLSPAQLRRFIHNDTQHLSRLLQSPCVGQQLVVTEGVYSMDGDSAPLAEIQHIARRHHAWLLVDDAHGIGVTGDEGRGTCWQRGVKPELLVVTFGKGFGVSGAAVLCSESVADYLLQFARHLVYSTSMPPAQAQALSASLAVIRSDEGRERREKLAALVQRFRAGVNASRFTLLNAHSAIQPLIVGDNSRALRLAEALRQQGCWATAIRPPTVPVGTARLRLTLTQAHEACDIDRLLEVLHGAGE.

Residue Arg21 participates in substrate binding. 108 to 109 (GF) is a pyridoxal 5'-phosphate binding site. His133 provides a ligand contact to substrate. Pyridoxal 5'-phosphate-binding residues include Ser179, His207, and Thr233. Lys236 is modified (N6-(pyridoxal phosphate)lysine). Position 352 (Thr352) interacts with substrate.

This sequence belongs to the class-II pyridoxal-phosphate-dependent aminotransferase family. BioF subfamily. Homodimer. It depends on pyridoxal 5'-phosphate as a cofactor.

The catalysed reaction is 6-carboxyhexanoyl-[ACP] + L-alanine + H(+) = (8S)-8-amino-7-oxononanoate + holo-[ACP] + CO2. It functions in the pathway cofactor biosynthesis; biotin biosynthesis. In terms of biological role, catalyzes the decarboxylative condensation of pimeloyl-[acyl-carrier protein] and L-alanine to produce 8-amino-7-oxononanoate (AON), [acyl-carrier protein], and carbon dioxide. The polypeptide is 8-amino-7-oxononanoate synthase (Salmonella choleraesuis (strain SC-B67)).